We begin with the raw amino-acid sequence, 725 residues long: IML2-like protein YKR018C (725 aa).

At T196 the chain carries Phosphothreonine. Phosphoserine occurs at positions 246, 377, and 380.

The protein belongs to the IML2 family.

It localises to the cytoplasm. Its subcellular location is the nucleus. The polypeptide is IML2-like protein YKR018C (Saccharomyces cerevisiae (strain ATCC 204508 / S288c) (Baker's yeast)).